The following is a 115-amino-acid chain: MKNKFVELVEKSQLRTDLPEFNPGDSITVNLWIKEGDKQRIQAFKGFVLRKRNRGLHSAFTVRKMSSGMGVERTFQTHSPLIDSIIVEKRADVRRAKLYYMRGLTGKAARIKEKV.

Belongs to the bacterial ribosomal protein bL19 family.

In terms of biological role, this protein is located at the 30S-50S ribosomal subunit interface and may play a role in the structure and function of the aminoacyl-tRNA binding site. This is Large ribosomal subunit protein bL19 from Francisella tularensis subsp. mediasiatica (strain FSC147).